Here is a 706-residue protein sequence, read N- to C-terminus: Solute carrier organic anion transporter family member 6C1 (706 aa).

Positions 1–24 (MAHVRNKKSDDKKAMVVAKEDTNK) are disordered. Residues 1-94 (MAHVRNKKSD…PFVQRFNNID (94 aa)) lie on the Cytoplasmic side of the membrane. Basic and acidic residues predominate over residues 7-24 (KKSDDKKAMVVAKEDTNK). A helical transmembrane segment spans residues 95–118 (GFMTLYVAAVLIHGALFAVVDMTL). Topologically, residues 119 to 130 (NIYQVQFSLTRT) are extracellular. The chain crosses the membrane as a helical span at residues 131-151 (EWYLMDFSDYIASFVVAIIIA). The Cytoplasmic segment spans residues 152–159 (HFGSKGNR). Residues 160 to 180 (TRWIAASCILMGLESMLFAFP) traverse the membrane as a helical segment. Topologically, residues 181-218 (FFTYEIIIPGRQSIELCMEENEKRNIICGNSVPNRSKC) are extracellular. An N-linked (GlcNAc...) asparagine glycan is attached at Asn-214. Residues 219-241 (IYFHIAGQCIHGIAGMPIYILGI) form a helical membrane-spanning segment. The Cytoplasmic portion of the chain corresponds to 242 to 253 (TFIFDHIPTSSC). Residues 254-277 (GFYLAIGHSAYLIGYLLGMVGGLQ) form a helical membrane-spanning segment. Residues 278–301 (NFQPPPKEKTVEIEPAKVYQLLQS) lie on the Extracellular side of the membrane. The helical transmembrane segment at 302 to 324 (GWWKTFLIIAAISFCVSFMMVCF) threads the bilayer. At 325-374 (PTSLPGAHKLRLAKRKEPPTIDRRLKDMKIQPHLKGFLHNIWHILKNPLM) the chain is on the cytoplasmic side. A helical membrane pass occupies residues 375-396 (LTQAICKVSEYLTFNTSLYFLP). Over 397–410 (HHLQTQFLITPGIA) the chain is Extracellular. Residues 411-432 (SLLTGAFVLPGGIIGHFLGGLI) form a helical membrane-spanning segment. The Cytoplasmic segment spans residues 433 to 445 (VDRLEMTNKNKLK). A helical membrane pass occupies residues 446–466 (FTLVTTVVSVGLFLLIFFVEC). Topologically, residues 467-565 (QTTTFAGINE…IAGTCDSDCL (99 aa)) are extracellular. A Kazal-like domain is found at 485–540 (GNLTADCNEYCDCTTSLYTSICGRDEKEYFSPCFAGCKATKVSQTEKTYYNCSCIK). Asn-486 is a glycosylation site (N-linked (GlcNAc...) asparagine). Cystine bridges form between Cys-491–Cys-521, Cys-497–Cys-517, and Cys-506–Cys-538. Residue Asn-535 is glycosylated (N-linked (GlcNAc...) asparagine). Residues 566–589 (KLPLFFAFYFSATVFSNMCSIPVI) form a helical membrane-spanning segment. At 590–604 (SIILQSVPANFTSLS) the chain is on the cytoplasmic side. The helical transmembrane segment at 605–624 (LGVTYAIVKFVASVPAPLLF) threads the bilayer. Residues 625–652 (RLSSAIACIYWDNNRCGGKERCWIYNKN) lie on the Extracellular side of the membrane. The helical transmembrane segment at 653–675 (ILVYEFMGIWMSSQLIIVLLNIY) threads the bilayer. Over 676-706 (AIQIHDVVVHGEITESKTTVKDVKEQKERKA) the chain is Cytoplasmic.

It belongs to the organo anion transporter (TC 2.A.60) family. As to quaternary structure, component of the CatSper complex or CatSpermasome composed of the core pore-forming members CATSPER1, CATSPER2, CATSPER3 and CATSPER4 as well as auxiliary members CATSPERB, CATSPERG2, CATSPERD, CATSPERE, CATSPERZ, C2CD6/CATSPERT, SLCO6C1, TMEM249, TMEM262 and EFCAB9. HSPA1 may be an additional auxiliary complex member. The core complex members CATSPER1, CATSPER2, CATSPER3 and CATSPER4 form a heterotetrameric channel. The auxiliary CATSPERB, CATSPERG2, CATSPERD and CATSPERE subunits form a pavilion-like structure over the pore which stabilizes the complex through interactions with CATSPER4, CATSPER3, CATSPER1 and CATSPER2 respectively. SLCO6C1 interacts with CATSPERE and TMEM262/CATSPERH interacts with CATSPERB, further stabilizing the complex. C2CD6/CATSPERT interacts at least with CATSPERD and is required for targeting the CatSper complex in the flagellar membrane.

The protein localises to the cell projection. Its subcellular location is the cilium. The protein resides in the flagellum membrane. Its function is as follows. Auxiliary component of the CatSper complex, a complex involved in sperm cell hyperactivation. This Mus musculus (Mouse) protein is Solute carrier organic anion transporter family member 6C1.